Consider the following 248-residue polypeptide: Conoporin-Cn1 (248 aa).

A signal peptide spans 1–23 (MGVQFPALKTMVTVFLLLMGNMS). The segment at 45–64 (TPGSSLYGVALKDLADTSYN) is N-terminal region. Gly120, Ser138, Pro140, Tyr167, and Tyr171 together coordinate phosphocholine.

This sequence belongs to the actinoporin family. Conoidea subfamily. As to quaternary structure, octamer or nonamer in membranes. Monomer in the soluble state. 9 isoforms are detected in the injectable venom, mainly corresponding to different oxidative states. In terms of tissue distribution, expressed by the venom duct.

It is found in the secreted. The protein localises to the nematocyst. The protein resides in the target cell membrane. Its function is as follows. Pore-forming protein that forms pores of around 1 nm and causes cardiac stimulation and cytolysis. The protein is Conoporin-Cn1 of Conus consors (Singed cone).